Reading from the N-terminus, the 246-residue chain is 1-(5-phosphoribosyl)-5-[(5-phosphoribosylamino)methylideneamino] imidazole-4-carboxamide isomerase (246 aa).

Residue Asp-10 is the Proton acceptor of the active site. Asp-135 acts as the Proton donor in catalysis.

It belongs to the HisA/HisF family.

It localises to the cytoplasm. It carries out the reaction 1-(5-phospho-beta-D-ribosyl)-5-[(5-phospho-beta-D-ribosylamino)methylideneamino]imidazole-4-carboxamide = 5-[(5-phospho-1-deoxy-D-ribulos-1-ylimino)methylamino]-1-(5-phospho-beta-D-ribosyl)imidazole-4-carboxamide. It participates in amino-acid biosynthesis; L-histidine biosynthesis; L-histidine from 5-phospho-alpha-D-ribose 1-diphosphate: step 4/9. The polypeptide is 1-(5-phosphoribosyl)-5-[(5-phosphoribosylamino)methylideneamino] imidazole-4-carboxamide isomerase (Methanosarcina mazei (strain ATCC BAA-159 / DSM 3647 / Goe1 / Go1 / JCM 11833 / OCM 88) (Methanosarcina frisia)).